A 323-amino-acid polypeptide reads, in one-letter code: NADH-ubiquinone oxidoreductase chain 1 (323 aa).

The next 8 membrane-spanning stretches (helical) occupy residues 8 to 28, 75 to 95, 105 to 125, 151 to 171, 177 to 197, 234 to 254, 258 to 278, and 298 to 318; these read LINPLLYMIPILLAVAFLTLI, MFLIAPTMALALAMSIWAPLP, LGILFILALSSLAVYTILGSG, LGLILLCMIMLAGGFTYTTLM, MWLIIPGWPMAAMWYISTLAE, ANILMMNTLSYLILFLGSSFM, ELTTISLMIKSSILSMIFLWV, and FLPITLAMTLWHISLPISMLG.

This sequence belongs to the complex I subunit 1 family. In terms of assembly, core subunit of respiratory chain NADH dehydrogenase (Complex I) which is composed of 45 different subunits.

The protein localises to the mitochondrion inner membrane. It catalyses the reaction a ubiquinone + NADH + 5 H(+)(in) = a ubiquinol + NAD(+) + 4 H(+)(out). Its function is as follows. Core subunit of the mitochondrial membrane respiratory chain NADH dehydrogenase (Complex I) which catalyzes electron transfer from NADH through the respiratory chain, using ubiquinone as an electron acceptor. Essential for the catalytic activity and assembly of complex I. The polypeptide is NADH-ubiquinone oxidoreductase chain 1 (mt-nd1) (Xenopus laevis (African clawed frog)).